A 119-amino-acid polypeptide reads, in one-letter code: Large ribosomal subunit protein uL22 (119 aa).

It belongs to the universal ribosomal protein uL22 family. As to quaternary structure, part of the 50S ribosomal subunit.

In terms of biological role, this protein binds specifically to 23S rRNA; its binding is stimulated by other ribosomal proteins, e.g. L4, L17, and L20. It is important during the early stages of 50S assembly. It makes multiple contacts with different domains of the 23S rRNA in the assembled 50S subunit and ribosome. Its function is as follows. The globular domain of the protein is located near the polypeptide exit tunnel on the outside of the subunit, while an extended beta-hairpin is found that lines the wall of the exit tunnel in the center of the 70S ribosome. This is Large ribosomal subunit protein uL22 from Chlorobium luteolum (strain DSM 273 / BCRC 81028 / 2530) (Pelodictyon luteolum).